We begin with the raw amino-acid sequence, 378 residues long: Sphingosine 1-phosphate receptor 3 (378 aa).

At 1-44 (MATTHAQGHQPVLGNDTLREHYDYVGKLAGRLRDPPEGGTLITT) the chain is on the extracellular side. Asparagine 15 is a glycosylation site (N-linked (GlcNAc...) asparagine). A helical transmembrane segment spans residues 45-65 (ILFLVTCSFIVLENLMVLIAI). Residues 66 to 74 (WKNNKFHNR) lie on the Cytoplasmic side of the membrane. The helical transmembrane segment at 75–95 (MYFFIGNLALCDLLAGIAYKV) threads the bilayer. The Extracellular segment spans residues 96–115 (NILMSGRKTFSLSPTVWFLR). A helical transmembrane segment spans residues 116-136 (EGSMFVALGASTCSLLAIAIE). Topologically, residues 137-154 (RHLTMIKMRPYDANKKHR) are cytoplasmic. The helical transmembrane segment at 155 to 175 (VFLLIGMCWLIAFSLGALPIL) threads the bilayer. Over 176–196 (GWNCLENFPDCSTILPLYSKK) the chain is Extracellular. Residues 197–217 (YIAFLISIFTAILVTIVILYA) traverse the membrane as a helical segment. The Cytoplasmic portion of the chain corresponds to 218-244 (RIYCLVKSSSRRVANHNSERSMALLRT). The chain crosses the membrane as a helical span at residues 245–265 (VVIVVSVFIACWSPLFILFLI). The Extracellular portion of the chain corresponds to 266–281 (DVACRAKECSILFKSQ). A helical membrane pass occupies residues 282 to 302 (WFIMLAVLNSAMNPVIYTLAS). Over 303-378 (KEMRRAFFRL…RSFQNGVLCK (76 aa)) the chain is Cytoplasmic. Positions 323 to 354 (TQASPMQPALDPSRSKSSSSNNSSHSPKVKED) are disordered. At serine 326 the chain carries Phosphoserine. The span at 337-348 (SKSSSSNNSSHS) shows a compositional bias: low complexity.

Belongs to the G-protein coupled receptor 1 family. Most abundant in heart, lung, kidney and spleen; low but detectable in brain, thymus, muscle and testis; and nearly undetectable in liver, stomach, and intestine. Expressed in embryonic lung from embryonic day 14-18. Also abundantly detected in embryonic nasal cartilage, sphenoid bone, vena cava, Meckel's cartilage/incisor teeth, genital tubercle and bladder.

The protein resides in the cell membrane. Its function is as follows. Receptor for the lysosphingolipid sphingosine 1-phosphate (S1P). S1P is a bioactive lysophospholipid that elicits diverse physiological effect on most types of cells and tissues. The sequence is that of Sphingosine 1-phosphate receptor 3 (S1pr3) from Mus musculus (Mouse).